A 149-amino-acid polypeptide reads, in one-letter code: Protein GR6 (149 aa).

Expressed in fetus (aged from 7 to 8 weeks). Weakly expressed in lymphocytes.

The sequence is that of Protein GR6 from Homo sapiens (Human).